A 380-amino-acid chain; its full sequence is Carbamoyl phosphate synthase small chain (380 aa).

A CPSase region spans residues 1 to 184 (MTTSTRGAHR…EAYVVPAIGE (184 aa)). Residues S55, G236, and G238 each coordinate L-glutamine. Residues 188–380 (TVAAVDLGIK…FVNLMEGQRA (193 aa)) enclose the Glutamine amidotransferase type-1 domain. C264 functions as the Nucleophile in the catalytic mechanism. L-glutamine-binding residues include F265, Q268, N306, G308, and F309. Active-site residues include H354 and E356.

The protein belongs to the CarA family. In terms of assembly, composed of two chains; the small (or glutamine) chain promotes the hydrolysis of glutamine to ammonia, which is used by the large (or ammonia) chain to synthesize carbamoyl phosphate. Tetramer of heterodimers (alpha,beta)4.

It catalyses the reaction hydrogencarbonate + L-glutamine + 2 ATP + H2O = carbamoyl phosphate + L-glutamate + 2 ADP + phosphate + 2 H(+). The catalysed reaction is L-glutamine + H2O = L-glutamate + NH4(+). Its pathway is amino-acid biosynthesis; L-arginine biosynthesis; carbamoyl phosphate from bicarbonate: step 1/1. It functions in the pathway pyrimidine metabolism; UMP biosynthesis via de novo pathway; (S)-dihydroorotate from bicarbonate: step 1/3. Its function is as follows. Small subunit of the glutamine-dependent carbamoyl phosphate synthetase (CPSase). CPSase catalyzes the formation of carbamoyl phosphate from the ammonia moiety of glutamine, carbonate, and phosphate donated by ATP, constituting the first step of 2 biosynthetic pathways, one leading to arginine and/or urea and the other to pyrimidine nucleotides. The small subunit (glutamine amidotransferase) binds and cleaves glutamine to supply the large subunit with the substrate ammonia. This is Carbamoyl phosphate synthase small chain from Streptomyces coelicolor (strain ATCC BAA-471 / A3(2) / M145).